Reading from the N-terminus, the 517-residue chain is Maturase K (517 aa).

This sequence belongs to the intron maturase 2 family. MatK subfamily.

The protein localises to the plastid. It is found in the chloroplast. Functionally, usually encoded in the trnK tRNA gene intron. Probably assists in splicing its own and other chloroplast group II introns. In Acer pseudoplatanus (Sycamore maple), this protein is Maturase K.